The primary structure comprises 433 residues: MRMVDIIEKKRDGKSLSKEEIEFFIKGYTNGDIPDYQASSLAMAIFFQDMNDEERAALTMAMVNSGDVIDLSKINGIKVDKHSTGGVGDTTTLVLAPLVAAVGVPVAKMSGRGLGHTGGTIDKLESIKGFHVEISEEDFIKLVNENQVAVIGQSGNLTPADKKLYALRDVTGTVNSIPLIASSIMSKKIAAGADAIVLDVKTGNGAFMKTLEDAEALAHAMVSIGNNVGRNTMAIISDMSQPLGRAIGNALELKEAIDTLNGKGPEDLTELVLTLGSQMVVLANRANTLEEARQLLNEAIENGSALEKFKTFLENQGGDVSVVDAPELLPTATYQIEYKAQSSGVVSELIANEIGVASMMLGAGRQTKEDEIDLSVGIVLNKKVGDVVKEGESLLTIHSNRENVDDVIKKLDESIEIQAQATTPTLIHKIITE.

81 to 83 serves as a coordination point for phosphate; sequence KHS. Residues G88 and T90 each contribute to the K(+) site. Residues T92, 108 to 110, and T120 contribute to the phosphate site; that span reads KMS. 2 residues coordinate substrate: R168 and K187. Residues L243, A246, and E255 each contribute to the K(+) site.

The protein belongs to the thymidine/pyrimidine-nucleoside phosphorylase family. In terms of assembly, homodimer. K(+) serves as cofactor.

It catalyses the reaction uridine + phosphate = alpha-D-ribose 1-phosphate + uracil. The enzyme catalyses thymidine + phosphate = 2-deoxy-alpha-D-ribose 1-phosphate + thymine. It carries out the reaction 2'-deoxyuridine + phosphate = 2-deoxy-alpha-D-ribose 1-phosphate + uracil. Its function is as follows. Catalyzes phosphorolysis of the pyrimidine nucleosides uridine, thymidine and 2'-deoxyuridine with the formation of the corresponding pyrimidine base and ribose-1-phosphate. In Staphylococcus haemolyticus (strain JCSC1435), this protein is Pyrimidine-nucleoside phosphorylase (pdp).